The sequence spans 426 residues: Serine hydroxymethyltransferase (426 aa).

(6S)-5,6,7,8-tetrahydrofolate-binding positions include leucine 118 and 122–124 (GHL). Lysine 227 carries the N6-(pyridoxal phosphate)lysine modification.

Belongs to the SHMT family. As to quaternary structure, homodimer. It depends on pyridoxal 5'-phosphate as a cofactor.

It is found in the cytoplasm. It catalyses the reaction (6R)-5,10-methylene-5,6,7,8-tetrahydrofolate + glycine + H2O = (6S)-5,6,7,8-tetrahydrofolate + L-serine. Its pathway is one-carbon metabolism; tetrahydrofolate interconversion. It functions in the pathway amino-acid biosynthesis; glycine biosynthesis; glycine from L-serine: step 1/1. Its function is as follows. Catalyzes the reversible interconversion of serine and glycine with tetrahydrofolate (THF) serving as the one-carbon carrier. This reaction serves as the major source of one-carbon groups required for the biosynthesis of purines, thymidylate, methionine, and other important biomolecules. Also exhibits THF-independent aldolase activity toward beta-hydroxyamino acids, producing glycine and aldehydes, via a retro-aldol mechanism. The polypeptide is Serine hydroxymethyltransferase (Mycobacterium avium (strain 104)).